The primary structure comprises 540 residues: GMP synthase [glutamine-hydrolyzing] (540 aa).

Residues 24 to 217 enclose the Glutamine amidotransferase type-1 domain; the sequence is KILIVDFGSQ…VRKVAGLTGD (194 aa). Cysteine 101 (nucleophile) is an active-site residue. Catalysis depends on residues histidine 191 and glutamate 193. The GMPS ATP-PPase domain maps to 218 to 415; sequence WTMRAFREEA…LGLPEIFVGR (198 aa). 245–251 provides a ligand contact to ATP; that stretch reads SGGVDSS.

Homodimer.

The catalysed reaction is XMP + L-glutamine + ATP + H2O = GMP + L-glutamate + AMP + diphosphate + 2 H(+). The protein operates within purine metabolism; GMP biosynthesis; GMP from XMP (L-Gln route): step 1/1. Its function is as follows. Catalyzes the synthesis of GMP from XMP. The protein is GMP synthase [glutamine-hydrolyzing] of Nitrobacter hamburgensis (strain DSM 10229 / NCIMB 13809 / X14).